Here is a 172-residue protein sequence, read N- to C-terminus: 3-hydroxydecanoyl-[acyl-carrier-protein] dehydratase (172 aa).

H71 is a catalytic residue.

Belongs to the thioester dehydratase family. FabA subfamily. In terms of assembly, homodimer.

It is found in the cytoplasm. The enzyme catalyses a (3R)-hydroxyacyl-[ACP] = a (2E)-enoyl-[ACP] + H2O. It carries out the reaction (3R)-hydroxydecanoyl-[ACP] = (2E)-decenoyl-[ACP] + H2O. The catalysed reaction is (2E)-decenoyl-[ACP] = (3Z)-decenoyl-[ACP]. Its pathway is lipid metabolism; fatty acid biosynthesis. Its function is as follows. Necessary for the introduction of cis unsaturation into fatty acids. Catalyzes the dehydration of (3R)-3-hydroxydecanoyl-ACP to E-(2)-decenoyl-ACP and then its isomerization to Z-(3)-decenoyl-ACP. Can catalyze the dehydratase reaction for beta-hydroxyacyl-ACPs with saturated chain lengths up to 16:0, being most active on intermediate chain length. This chain is 3-hydroxydecanoyl-[acyl-carrier-protein] dehydratase, found in Escherichia coli O139:H28 (strain E24377A / ETEC).